Here is a 181-residue protein sequence, read N- to C-terminus: Probable pyruvoyl-dependent arginine decarboxylase (181 aa).

S43 bears the Pyruvic acid (Ser) mark.

This sequence belongs to the PdaD family. Requires pyruvate as cofactor.

The catalysed reaction is L-arginine + H(+) = agmatine + CO2. This Chlorobium luteolum (strain DSM 273 / BCRC 81028 / 2530) (Pelodictyon luteolum) protein is Probable pyruvoyl-dependent arginine decarboxylase.